The sequence spans 398 residues: MKTWIFICMSIAMLLWFLSTLRRKPSQKKGCIDAIIPAYNEGPCLAQSLDNLLRNPYFCRVICVNDGSTDNTEAVMAEVKRKWGDRFVAVTQKNTGKGGALMNGLNYATCDQVFLSDADTYVPPDQDGMGYMLAEIERGADAVGGIPSTALKGAGLLPHIRATVKLPMIVMKRTLQQLLGGAPFIISGACGMFRTDVLRKFGFSDRTKVEDLDLTWTLVANGYRIRQANRCIVYPQECNSPREEWRRWRRWIVGYAVCMRLHKRLLFSRFGIFSIFPMLLVVLYGVGIYLTTWFNEFITTGPHGVVLAMFPLIWVGVVCVIGAFSAWFHRCWLLVPLAPLSVVYVLLAYAIWIIYGLIAFFTGREPQRDKPTRYSALVEASTAYSQPSVTGTEKLSEA.

Belongs to the glycosyltransferase 2 family.

This is an uncharacterized protein from Escherichia coli (strain K12).